The sequence spans 432 residues: Adenylosuccinate synthetase (432 aa).

GTP is bound by residues 12-18 and 40-42; these read GDEGKGK and GHT. Asp13 serves as the catalytic Proton acceptor. Residues Asp13 and Gly40 each coordinate Mg(2+). IMP-binding positions include 13-16, 38-41, Thr129, Arg143, Gln224, Thr239, and Arg303; these read DEGK and NAGH. Catalysis depends on His41, which acts as the Proton donor. 299–305 provides a ligand contact to substrate; sequence VTTGRRR. GTP contacts are provided by residues Arg305, 331–333, and 413–415; these read KLD and GVG.

Belongs to the adenylosuccinate synthetase family. Homodimer. It depends on Mg(2+) as a cofactor.

It is found in the cytoplasm. The enzyme catalyses IMP + L-aspartate + GTP = N(6)-(1,2-dicarboxyethyl)-AMP + GDP + phosphate + 2 H(+). Its pathway is purine metabolism; AMP biosynthesis via de novo pathway; AMP from IMP: step 1/2. Functionally, plays an important role in the de novo pathway of purine nucleotide biosynthesis. Catalyzes the first committed step in the biosynthesis of AMP from IMP. This Mycobacterium avium (strain 104) protein is Adenylosuccinate synthetase.